The chain runs to 107 residues: uncharacterized protein (107 aa).

The segment at Lys86–Gly107 is disordered.

This is an uncharacterized protein from Saccharomyces cerevisiae (strain ATCC 204508 / S288c) (Baker's yeast).